A 759-amino-acid chain; its full sequence is LON peptidase N-terminal domain and RING finger protein 3 (759 aa).

The interval 1–69 (MESVRIEQML…PGTSTPESKV (69 aa)) is disordered. The segment covering 57–66 (EQSPGTSTPE) has biased composition (polar residues). A TPR 1 repeat occupies 67-100 (SKVLLTQADALASRGRIREALEVYRQLSERQQLV). Residues 158–196 (CRKCHGFLSDPVSLSCGHTFCKLCLERGRAADRRCALCG) form an RING-type 1 zinc finger. TPR repeat units lie at residues 243 to 276 (ASQLRHEGNRLYRERQVEAALLKYNEAVKLAPND), 278 to 310 (LLYSNRSQIYFTLESHENALHDAEIACKLRPMG), and 312 to 344 (KAHFRKAQALATLGKVEEALREFLYCVSLDGKN). Residues 360 to 454 (HCSSQEEAAA…TDQGDKPALS (95 aa)) form a disordered region. Over residues 380–393 (AKVKGDGQQHHMKD) the composition is skewed to basic and acidic residues. The segment at 467-505 (CALCMRLFYEPVTTPCGHTFCLKCLERCLDHNAKCPLCK) adopts an RING-type 2 zinc-finger fold. One can recognise a Lon N-terminal domain in the interval 546–755 (MEELSNLNKN…GIRRVLAFIS (210 aa)).

The polypeptide is LON peptidase N-terminal domain and RING finger protein 3 (LONRF3) (Homo sapiens (Human)).